Reading from the N-terminus, the 147-residue chain is MRDESRLDKYVIKEILRINRHLPRRRKTLEELLREERPHVVNRDGTKHYFDRDELERLADILPRYLHGRLKLPILIELGYSGAAVIRGKAEVRVVCEVLGEEWRFSQDRVELNMLDVRKLRREFPTATQYMFSTEYIMGRPKVERRG.

This sequence belongs to the UPF0216 family.

The sequence is that of UPF0216 protein MK1676 from Methanopyrus kandleri (strain AV19 / DSM 6324 / JCM 9639 / NBRC 100938).